The chain runs to 145 residues: Protein AggB (145 aa).

The first 24 residues, 1 to 24 (MLKKSILPMSCGVLVMVMSGLLDA), serve as a signal peptide directing secretion.

This sequence to E.coli AfaD.

The sequence is that of Protein AggB (aggB) from Escherichia coli.